The sequence spans 475 residues: Ribulose bisphosphate carboxylase large chain (475 aa).

A propeptide spanning residues 1–2 (MA) is cleaved from the precursor. Proline 3 is subject to N-acetylproline. Positions 123 and 173 each coordinate substrate. Catalysis depends on lysine 175, which acts as the Proton acceptor. Lysine 177 is a binding site for substrate. Lysine 201, aspartate 203, and glutamate 204 together coordinate Mg(2+). Lysine 201 carries the post-translational modification N6-carboxylysine. The Proton acceptor role is filled by histidine 294. Substrate-binding residues include arginine 295, histidine 327, and serine 379.

Belongs to the RuBisCO large chain family. Type I subfamily. Heterohexadecamer of 8 large chains and 8 small chains. Requires Mg(2+) as cofactor.

It localises to the plastid. It is found in the chloroplast. It carries out the reaction 2 (2R)-3-phosphoglycerate + 2 H(+) = D-ribulose 1,5-bisphosphate + CO2 + H2O. The enzyme catalyses D-ribulose 1,5-bisphosphate + O2 = 2-phosphoglycolate + (2R)-3-phosphoglycerate + 2 H(+). Functionally, ruBisCO catalyzes two reactions: the carboxylation of D-ribulose 1,5-bisphosphate, the primary event in carbon dioxide fixation, as well as the oxidative fragmentation of the pentose substrate in the photorespiration process. Both reactions occur simultaneously and in competition at the same active site. This Ostreococcus tauri protein is Ribulose bisphosphate carboxylase large chain.